A 292-amino-acid polypeptide reads, in one-letter code: Elongation factor Ts (292 aa).

The tract at residues threonine 81 to valine 84 is involved in Mg(2+) ion dislocation from EF-Tu.

The protein belongs to the EF-Ts family.

Its subcellular location is the cytoplasm. Functionally, associates with the EF-Tu.GDP complex and induces the exchange of GDP to GTP. It remains bound to the aminoacyl-tRNA.EF-Tu.GTP complex up to the GTP hydrolysis stage on the ribosome. The polypeptide is Elongation factor Ts (Psychromonas ingrahamii (strain DSM 17664 / CCUG 51855 / 37)).